Consider the following 344-residue polypeptide: MLVEKFLKDFTIPEKIEFLKSQGDGSYGKFTIYPFERGFGITIGNTLRRVLLSSIEGYAITAMRVQSNNKDSSSKVVSSEFDLIPGVSEDTLEIIANIKNIHLKLGEGEQRKTISFSVSGKDTNVLKASHFERDGVEVFNKDLVIATLSHDVNLDLEFQINYGRGYVSSEQNSKYLEEVNVIALDSIFSPIEKVSYSVEDTRVGQRSDYDKLVMEIWTTGVISAKDAIKKAASIVREFLFPLVDFEDNVNTSFEKSKSESSNLLDMSIEKLNLSVRSLNCLAKENVRTLGELISKNAEELSKARNFGKKSLEEIIEKLGSYRLYLGMSKEDALSVLSKNVKISE.

Positions 1 to 246 (MLVEKFLKDF…EFLFPLVDFE (246 aa)) are alpha N-terminal domain (alpha-NTD). Residues 259–344 (ESSNLLDMSI…VLSKNVKISE (86 aa)) are alpha C-terminal domain (alpha-CTD).

It belongs to the RNA polymerase alpha chain family. In terms of assembly, homodimer. The RNAP catalytic core consists of 2 alpha, 1 beta, 1 beta' and 1 omega subunit. When a sigma factor is associated with the core the holoenzyme is formed, which can initiate transcription.

The catalysed reaction is RNA(n) + a ribonucleoside 5'-triphosphate = RNA(n+1) + diphosphate. DNA-dependent RNA polymerase catalyzes the transcription of DNA into RNA using the four ribonucleoside triphosphates as substrates. The sequence is that of DNA-directed RNA polymerase subunit alpha from Borreliella burgdorferi (strain ATCC 35210 / DSM 4680 / CIP 102532 / B31) (Borrelia burgdorferi).